The chain runs to 465 residues: Ribulose bisphosphate carboxylase large chain (465 aa).

An N6,N6,N6-trimethyllysine modification is found at K4. Substrate is bound by residues N113 and T163. The Proton acceptor role is filled by K165. K167 serves as a coordination point for substrate. Residues K191, D193, and E194 each contribute to the Mg(2+) site. An N6-carboxylysine modification is found at K191. H284 (proton acceptor) is an active-site residue. Substrate is bound by residues R285, H317, and S369.

This sequence belongs to the RuBisCO large chain family. Type I subfamily. Heterohexadecamer of 8 large chains and 8 small chains; disulfide-linked. The disulfide link is formed within the large subunit homodimers. Requires Mg(2+) as cofactor. In terms of processing, the disulfide bond which can form in the large chain dimeric partners within the hexadecamer appears to be associated with oxidative stress and protein turnover.

The protein resides in the plastid. It is found in the chloroplast. The enzyme catalyses 2 (2R)-3-phosphoglycerate + 2 H(+) = D-ribulose 1,5-bisphosphate + CO2 + H2O. It catalyses the reaction D-ribulose 1,5-bisphosphate + O2 = 2-phosphoglycolate + (2R)-3-phosphoglycerate + 2 H(+). RuBisCO catalyzes two reactions: the carboxylation of D-ribulose 1,5-bisphosphate, the primary event in carbon dioxide fixation, as well as the oxidative fragmentation of the pentose substrate in the photorespiration process. Both reactions occur simultaneously and in competition at the same active site. This chain is Ribulose bisphosphate carboxylase large chain, found in Epacris sp.